The sequence spans 132 residues: Agouti-signaling protein (132 aa).

An N-terminal signal peptide occupies residues 1–22 (MDVTRLLLATLLVFLCFFTAYS). A glycan (N-linked (GlcNAc...) asparagine) is linked at Asn-39. The interval 61-87 (QISRKEAEKKRSSKKEASMKKVARPRT) is disordered. Over residues 63 to 79 (SRKEAEKKRSSKKEASM) the composition is skewed to basic and acidic residues. Cystine bridges form between Cys-93-Cys-108, Cys-100-Cys-114, Cys-107-Cys-125, Cys-111-Cys-132, and Cys-116-Cys-123. Residues 93-132 (CVATRDSCKPPAPACCDPCASCQCRFFRSACSCRVLSLNC) form the Agouti domain.

The protein localises to the secreted. In terms of biological role, involved in the regulation of melanogenesis. The binding of ASP to MC1R precludes alpha-MSH initiated signaling and thus blocks production of cAMP, leading to a down-regulation of eumelanogenesis (brown/black pigment) and thus increasing synthesis of pheomelanin (yellow/red pigment). The chain is Agouti-signaling protein (ASIP) from Macaca maura (Moor macaque).